The chain runs to 60 residues: Ribosome biogenesis protein Nop10 (60 aa).

It belongs to the NOP10 family.

Its function is as follows. Involved in ribosome biogenesis; more specifically in 18S rRNA pseudouridylation and in cleavage of pre-rRNA. The protein is Ribosome biogenesis protein Nop10 of Haloquadratum walsbyi (strain DSM 16790 / HBSQ001).